We begin with the raw amino-acid sequence, 307 residues long: MTKTIGLLVMAYGTPYKESDIEPYYTDIRRGKKPTEEELQDLKDRYEFIGGLSPLAGTTDRQAEALLEALNKEQDDVNFKLYIGLKHISPYIEEAVEQMHNDGIKEAVTVVLAPHYSSFSVGSYDQRAQEKADEYGIQLTHIKHYYQQPKFIKYWTEKINETLEQIPNQEHDETVLVVSAHSLPKGLIERNNDPYPHELHETAEILKQESNIIHVAEGWQSEGNTGTPWLGPDVQDLTRDLYKEHQFKHFIYTPVGFVCEHLEVLYDNDYECKVVCDDIGVNYYRPEMPNTHPLFIGAIVDEIQSHI.

Fe-coproporphyrin III contacts are provided by residues Tyr12, Arg29, Arg45–Tyr46, Ser53, and Tyr124. Residues His181 and Glu263 each coordinate Fe(2+).

The protein belongs to the ferrochelatase family.

Its subcellular location is the cytoplasm. It carries out the reaction Fe-coproporphyrin III + 2 H(+) = coproporphyrin III + Fe(2+). Its pathway is porphyrin-containing compound metabolism; protoheme biosynthesis. Its function is as follows. Involved in coproporphyrin-dependent heme b biosynthesis. Catalyzes the insertion of ferrous iron into coproporphyrin III to form Fe-coproporphyrin III. The chain is Coproporphyrin III ferrochelatase from Staphylococcus epidermidis (strain ATCC 12228 / FDA PCI 1200).